We begin with the raw amino-acid sequence, 208 residues long: Ribosomal RNA large subunit methyltransferase E (208 aa).

S-adenosyl-L-methionine is bound by residues G63, W65, D83, D99, and D124. K164 (proton acceptor) is an active-site residue.

Belongs to the class I-like SAM-binding methyltransferase superfamily. RNA methyltransferase RlmE family.

It localises to the cytoplasm. The catalysed reaction is uridine(2552) in 23S rRNA + S-adenosyl-L-methionine = 2'-O-methyluridine(2552) in 23S rRNA + S-adenosyl-L-homocysteine + H(+). Specifically methylates the uridine in position 2552 of 23S rRNA at the 2'-O position of the ribose in the fully assembled 50S ribosomal subunit. This chain is Ribosomal RNA large subunit methyltransferase E, found in Salmonella paratyphi A (strain ATCC 9150 / SARB42).